Here is an 82-residue protein sequence, read N- to C-terminus: Small ribosomal subunit protein uS17 (82 aa).

Belongs to the universal ribosomal protein uS17 family. As to quaternary structure, part of the 30S ribosomal subunit.

Its function is as follows. One of the primary rRNA binding proteins, it binds specifically to the 5'-end of 16S ribosomal RNA. This Nitrobacter hamburgensis (strain DSM 10229 / NCIMB 13809 / X14) protein is Small ribosomal subunit protein uS17.